The sequence spans 118 residues: Putative pterin-4-alpha-carbinolamine dehydratase (118 aa).

This sequence belongs to the pterin-4-alpha-carbinolamine dehydratase family.

It carries out the reaction (4aS,6R)-4a-hydroxy-L-erythro-5,6,7,8-tetrahydrobiopterin = (6R)-L-erythro-6,7-dihydrobiopterin + H2O. This chain is Putative pterin-4-alpha-carbinolamine dehydratase, found in Pseudomonas aeruginosa (strain LESB58).